The following is a 184-amino-acid chain: UPF0301 protein ABSDF3201 (184 aa).

This sequence belongs to the UPF0301 (AlgH) family.

The chain is UPF0301 protein ABSDF3201 from Acinetobacter baumannii (strain SDF).